The sequence spans 233 residues: Uracil-DNA glycosylase (233 aa).

The Proton acceptor role is filled by Asp-70.

This sequence belongs to the uracil-DNA glycosylase (UDG) superfamily. UNG family.

It is found in the cytoplasm. The catalysed reaction is Hydrolyzes single-stranded DNA or mismatched double-stranded DNA and polynucleotides, releasing free uracil.. Excises uracil residues from the DNA which can arise as a result of misincorporation of dUMP residues by DNA polymerase or due to deamination of cytosine. In Oleidesulfovibrio alaskensis (strain ATCC BAA-1058 / DSM 17464 / G20) (Desulfovibrio alaskensis), this protein is Uracil-DNA glycosylase.